The sequence spans 468 residues: Trehalose-binding lipoprotein LpqY (468 aa).

The first 25 residues, 1-25 (MVMSRGRIPRLGAAVLVALTTAAAA), serve as a signal peptide directing secretion. Cysteine 26 carries N-palmitoyl cysteine lipidation. Residue cysteine 26 is the site of S-diacylglycerol cysteine attachment. Cysteine 54 and cysteine 372 are oxidised to a cystine. Alpha,alpha-trehalose-binding residues include aspartate 97, asparagine 151, tryptophan 276, phenylalanine 278, glycine 351, and arginine 421.

This sequence belongs to the bacterial solute-binding protein 1 family. As to quaternary structure, monomer. The complex is composed of two ATP-binding proteins (SugC), two transmembrane proteins (SugA and SugB) and a solute-binding protein (LpqY).

It is found in the cell inner membrane. Part of the ABC transporter complex LpqY-SugA-SugB-SugC, which is highly specific for uptake of trehalose. Involved in the recycling of extracellular trehalose released from trehalose-containing molecules synthesized by M.tuberculosis. Trehalose uptake is essential for virulence. This Mycobacterium tuberculosis (strain CDC 1551 / Oshkosh) protein is Trehalose-binding lipoprotein LpqY (lpqY).